We begin with the raw amino-acid sequence, 596 residues long: Dihydroxy-acid dehydratase pbrD, mitochondrial (596 aa).

The N-terminal 18 residues, 1-18 (MATSSIRSRALGLSRRAR), are a transit peptide targeting the mitochondrion. Cys-84 contributes to the [2Fe-2S] cluster binding site. Asp-116 contributes to the Mg(2+) binding site. Residue Cys-157 coordinates [2Fe-2S] cluster. Asp-158 contacts Mg(2+). Residue Cys-230 coordinates [2Fe-2S] cluster. Glu-483 contacts Mg(2+). Catalysis depends on Ser-509, which acts as the Proton acceptor.

Belongs to the IlvD/Edd family. It depends on [2Fe-2S] cluster as a cofactor. Requires Mg(2+) as cofactor.

It is found in the mitochondrion. It carries out the reaction (2R)-2,3-dihydroxy-3-methylbutanoate = 3-methyl-2-oxobutanoate + H2O. It catalyses the reaction (2R,3R)-2,3-dihydroxy-3-methylpentanoate = (S)-3-methyl-2-oxopentanoate + H2O. Its pathway is amino-acid biosynthesis; L-isoleucine biosynthesis; L-isoleucine from 2-oxobutanoate: step 3/4. The protein operates within amino-acid biosynthesis; L-valine biosynthesis; L-valine from pyruvate: step 3/4. Its activity is regulated as follows. DHAD activity is not inhibited by the dihydroxyacid dehydratase inhibitor aspterric acid (AA). Its function is as follows. Dihydroxyacid dehydratase; part of the gene cluster that mediates the biosynthesis of the sesquiterpenoid aspterric acid (AA), an inhibitor of dihydroxy-acid dehydratase (DHAD) effective as an herbicide. Performs the third step in the common pathway leading to biosynthesis of branched-chain amino acids. Catalyzes the dehydration of (2R,3R)-2,3-dihydroxy-3-methylpentanoate (2,3-dihydroxy-3-methylvalerate) into 2-oxo-3-methylpentanoate (2-oxo-3-methylvalerate) and of (2R)-2,3-dihydroxy-3-methylbutanoate (2,3-dihydroxyisovalerate) into 2-oxo-3-methylbutanoate (2-oxoisovalerate), the penultimate precursor to L-isoleucine and L-valine, respectively. PbrD confers self-resistance in the presence of the dihydroxyacid dehydratase inhibitor aspterric acid (AA) produced by the ast cluster. This is Dihydroxy-acid dehydratase pbrD, mitochondrial from Penicillium brasilianum.